Consider the following 347-residue polypeptide: MRAMRLVEIGKPLKLEDIPIPKPKGSQVLIKIEAAGVCHSDVHMRQGRFGNLRIVEDLGVKLPVTLGHEIAGRIEEVGDEVVGYSKGDLVAVNPWEGEGNCYYCRIGEEHLCDSPRWLGINYDGAYAEYVLVPHYKYLYKLRRLSAVEAAPLTCSGVTTYRAVRKASLDPSKTLVVIGAGGGLGTMAIQIAKAVSGATIIGVDVREEALEAAKRAGADYVINASSQDPVSEIRRITQGKGADAVIDLNNSEKTLSIYPYVLAKQGKYVMVGLFGADLKYHAPLITLNEVQFIGSLVGNQSDFLGIMSLAEAGKVKPMVTKTMKLEEANEAIDNLENFKAVGRQVLVP.

Lys-11 bears the N6-methyllysine mark. Cys-38, His-68, Glu-98, Cys-101, Cys-104, Cys-112, and Cys-154 together coordinate Zn(2+). Lys-213 carries the N6-methyllysine modification.

This sequence belongs to the zinc-containing alcohol dehydrogenase family. In terms of assembly, homodimer and homotetramer. It depends on Zn(2+) as a cofactor.

It carries out the reaction a primary alcohol + NAD(+) = an aldehyde + NADH + H(+). The enzyme catalyses a secondary alcohol + NAD(+) = a ketone + NADH + H(+). This is NAD-dependent alcohol dehydrogenase (adh) from Sulfurisphaera tokodaii (strain DSM 16993 / JCM 10545 / NBRC 100140 / 7) (Sulfolobus tokodaii).